Here is a 217-residue protein sequence, read N- to C-terminus: Polyadenylate-binding protein 3 (217 aa).

The disordered stretch occupies residues 1-28 (MEEEEHEVYGGEIPEVGDTDVPDPDIDM). The segment covering 15–28 (EVGDTDVPDPDIDM) has biased composition (acidic residues). Residues 30–71 (AADEDAVTELAEMKRRLKEMEEEAAALREMQAKVEKEMGATQ) adopt a coiled-coil conformation. Residues 75–216 (SMAANQEGKE…FRRPMRYMPY (142 aa)) form a necessary for homooligomerization region. The region spanning 89-165 (RSVYVGNVDY…RQLKVSPKRT (77 aa)) is the RRM domain. A Nuclear localization signal motif is present at residues 162–169 (PKRTNVPG).

Monomer and homooligomer. Binds RNA as a monomer and oligomerizes when bound to poly(A). Forms a complex with cleavage and polyadenylation specificity factor (CPSF) subunits PAPS4, PABN1, PABN2, CSTF50 and FIPS5. Interacts with CSP3.

The protein localises to the nucleus speckle. It is found in the cytoplasm. Its function is as follows. Involved in the 3'-end formation of mRNA precursors (pre-mRNA) by the addition of a poly(A) tail of 200-250 nt to the upstream cleavage product. Stimulates poly(A) polymerase (PAPOLA) conferring processivity on the poly(A) tail elongation reaction and also controls the poly(A) tail length. Increases the affinity of poly(A) polymerase for RNA. Binds to poly(A) and to poly(G) with high affinity. May protect the poly(A) tail from degradation. The chain is Polyadenylate-binding protein 3 from Arabidopsis thaliana (Mouse-ear cress).